The sequence spans 74 residues: Peptide Im-4 (74 aa).

An N-terminal signal peptide occupies residues 1–22 (MKFQYLLAIFMIVLVVTDHCQA). Residue Lys-39 is modified to Lysine amide; partial. A propeptide spanning residues 40-74 (GRRRRQLEARYEPQQRNFRKREIDFEKLFANMPDY) is cleaved from the precursor.

Belongs to the non-disulfide-bridged peptide (NDBP) superfamily. Short antimicrobial peptide (group 4) family. As to expression, expressed by the venom gland.

The protein resides in the secreted. Its subcellular location is the target cell membrane. Its function is as follows. Antimicrobial peptide that probably forms pores in target membranes. Has antibacterial activity against Gram-positive bacteria S.aureus NBRC 13276 (MIC=5-10 uM) and B.subtilis NBRC 3009 (MIC=2.5-5 uM) but not against Gram-negative bacterium E.coli NBRC 3972. The sequence is that of Peptide Im-4 from Isometrus maculatus (Lesser brown scorpion).